The sequence spans 603 residues: Probable methyltransferase-like protein 25 (603 aa).

The disordered stretch occupies residues 326–352; the sequence is TSSQQIPNRETSEANKERRKMTSKSSE.

Functionally, probable methyltransferase. This chain is Probable methyltransferase-like protein 25 (METTL25), found in Homo sapiens (Human).